Consider the following 227-residue polypeptide: Prolactin (227 aa).

An N-terminal signal peptide occupies residues 1–28; the sequence is MNIKGSPWKGSLLLLLVSNLLLCQSVAP. An intrachain disulfide couples Cys32 to Cys39. Ser54 carries the post-translational modification Phosphoserine. An N-linked (GlcNAc...) asparagine; partial glycan is attached at Asn59. Ser62, Ser118, Ser163, and Ser194 each carry phosphoserine. 2 disulfide bridges follow: Cys86–Cys202 and Cys219–Cys227.

This sequence belongs to the somatotropin/prolactin family. In terms of assembly, interacts with PRLR.

The protein resides in the secreted. In terms of biological role, prolactin acts primarily on the mammary gland by promoting lactation. This is Prolactin (PRL) from Homo sapiens (Human).